Reading from the N-terminus, the 471-residue chain is Ubiquitin-conjugating enzyme E2 variant 3 (471 aa).

Residues 2-145 (EFDCEGLRRL…QEELPMYSLS (144 aa)) form the UEV domain. 191-219 (GELGIACTLAISAKGIADRLVLLDLSEGT) serves as a coordination point for NAD(+).

It in the N-terminal section; belongs to the ubiquitin-conjugating enzyme family. UEV subfamily. In the C-terminal section; belongs to the LDH/MDH superfamily. As to quaternary structure, homodimer. As to expression, colon, colon carcinoma cell lines, normal cervical epithelium, carcinomas of the uterine cervix and peripheral blood leukocytes.

Its function is as follows. Possible negative regulator of polyubiquitination. This is Ubiquitin-conjugating enzyme E2 variant 3 from Homo sapiens (Human).